A 282-amino-acid polypeptide reads, in one-letter code: Secretory carrier-associated membrane protein 1 (282 aa).

The segment at 1 to 49 (MSRYQSHSFDDGEINPFANPTSVPAATSKLSPLPPEPYDRGATMDIPLD) is disordered. Over 1 to 117 (MSRYQSHSFD…EIPIHLQRIQ (117 aa)) the chain is Cytoplasmic. Residues 18 to 30 (ANPTSVPAATSKL) show a composition bias toward polar residues. S31 carries the post-translational modification Phosphoserine. The stretch at 48 to 93 (LDSGKDLKAKEKELREKEAELKRREQEIKRKEDAIAQAGIVIEEKN) forms a coiled coil. Transmembrane regions (helical) follow at residues 118-138 (YVAFTSMLGLVVCLLWNIVAV), 150-170 (IWFLAIIYFISGVPGAYVMWY), 185-205 (FGWFFFTYLFHIAFCVFAAVA), and 233-253 (IFYFIGFGFFCLESLVSIWVI). The Cytoplasmic segment spans residues 254-282 (QQVYMYFRGSGKAAEMKQEATRRAMMAAL).

It belongs to the SCAMP family.

The protein resides in the cell membrane. It localises to the cytoplasmic vesicle. It is found in the secretory vesicle membrane. Probably involved in membrane trafficking. This Arabidopsis thaliana (Mouse-ear cress) protein is Secretory carrier-associated membrane protein 1 (SCAMP1).